We begin with the raw amino-acid sequence, 378 residues long: Rhodopsin (378 aa).

Topologically, residues 1-53 (MMSIASGPSHAAYTWASQGGGFGNQTVVDKVPPEMLHMVDAHWYQFPPMNPLW) are extracellular. N24 carries an N-linked (GlcNAc...) asparagine glycan. Residues 54 to 78 (HALLGFVIGVLGVISVIGNGMVIYI) form a helical membrane-spanning segment. The Cytoplasmic portion of the chain corresponds to 79-90 (FTTTKSLRTPSN). A helical transmembrane segment spans residues 91 to 115 (LLVVNLAISDFLMMLCMSPAMVINC). Residues 116–130 (YYETWVLGPLFCELY) lie on the Extracellular side of the membrane. A disulfide bridge connects residues C127 and C204. Residues 131–150 (GLAGSLFGCASIWTMTMIAF) form a helical membrane-spanning segment. Topologically, residues 151-169 (DRYNVIVKGLSAKPMTING) are cytoplasmic. The chain crosses the membrane as a helical span at residues 170–193 (ALIRILTIWFFTLAWTIAPMFGWN). Topologically, residues 194–217 (RYVPEGNMTACGTDYLTKDLFSRS) are extracellular. A glycan (N-linked (GlcNAc...) asparagine) is linked at N200. Residues 218–245 (YILIYSIFVYFTPLFLIIYSYFFIIQAV) form a helical membrane-spanning segment. Over 246-280 (AAHEKNMREQAKKMNVASLRSAENQSTSAECKLAK) the chain is Cytoplasmic. The helical transmembrane segment at 281-304 (VALMTISLWFMAWTPYLVINYSGI) threads the bilayer. The Extracellular segment spans residues 305 to 311 (FETTKIS). A helical transmembrane segment spans residues 312-336 (PLFTIWGSLFAKANAVYNPIVYGIS). K323 carries the N6-(retinylidene)lysine modification. Over 337 to 378 (HPKYRAALFQKFPSLACTTEPTGADTMSTTTTVTEGNEKPAA) the chain is Cytoplasmic.

This sequence belongs to the G-protein coupled receptor 1 family. Opsin subfamily. In terms of processing, phosphorylated on some or all of the serine and threonine residues present in the C-terminal region.

The protein localises to the membrane. Functionally, visual pigments are the light-absorbing molecules that mediate vision. They consist of an apoprotein, opsin, covalently linked to cis-retinal. The protein is Rhodopsin of Camponotus atriceps (Florida carpenter ant).